Here is a 147-residue protein sequence, read N- to C-terminus: Methylated-DNA--protein-cysteine methyltransferase (147 aa).

Cys-112 functions as the Nucleophile; methyl group acceptor in the catalytic mechanism.

It belongs to the MGMT family.

Its subcellular location is the cytoplasm. It catalyses the reaction a 6-O-methyl-2'-deoxyguanosine in DNA + L-cysteinyl-[protein] = S-methyl-L-cysteinyl-[protein] + a 2'-deoxyguanosine in DNA. It carries out the reaction a 4-O-methyl-thymidine in DNA + L-cysteinyl-[protein] = a thymidine in DNA + S-methyl-L-cysteinyl-[protein]. In terms of biological role, involved in the cellular defense against the biological effects of O6-methylguanine (O6-MeG) and O4-methylthymine (O4-MeT) in DNA. Repairs the methylated nucleobase in DNA by stoichiometrically transferring the methyl group to a cysteine residue in the enzyme. This is a suicide reaction: the enzyme is irreversibly inactivated. This Archaeoglobus fulgidus (strain ATCC 49558 / DSM 4304 / JCM 9628 / NBRC 100126 / VC-16) protein is Methylated-DNA--protein-cysteine methyltransferase.